A 203-amino-acid chain; its full sequence is GTP cyclohydrolase-2 (203 aa).

49 to 53 (RIHSE) contributes to the GTP binding site. C54, C65, and C67 together coordinate Zn(2+). Residues Q70, 92–94 (EGR), and T114 each bind GTP. D126 functions as the Proton acceptor in the catalytic mechanism. R128 acts as the Nucleophile in catalysis. T149 and K154 together coordinate GTP.

The protein belongs to the GTP cyclohydrolase II family. The cofactor is Zn(2+).

The enzyme catalyses GTP + 4 H2O = 2,5-diamino-6-hydroxy-4-(5-phosphoribosylamino)-pyrimidine + formate + 2 phosphate + 3 H(+). Its pathway is cofactor biosynthesis; riboflavin biosynthesis; 5-amino-6-(D-ribitylamino)uracil from GTP: step 1/4. Catalyzes the conversion of GTP to 2,5-diamino-6-ribosylamino-4(3H)-pyrimidinone 5'-phosphate (DARP), formate and pyrophosphate. In Shewanella sp. (strain MR-4), this protein is GTP cyclohydrolase-2.